Here is a 422-residue protein sequence, read N- to C-terminus: Glucose-1-phosphate adenylyltransferase 2 (422 aa).

Residues Tyr110, Gly175, 190 to 191, and Ser208 each bind alpha-D-glucose 1-phosphate; that span reads EK.

It belongs to the bacterial/plant glucose-1-phosphate adenylyltransferase family. Homotetramer.

It catalyses the reaction alpha-D-glucose 1-phosphate + ATP + H(+) = ADP-alpha-D-glucose + diphosphate. It participates in glycan biosynthesis; glycogen biosynthesis. Involved in the biosynthesis of ADP-glucose, a building block required for the elongation reactions to produce glycogen. Catalyzes the reaction between ATP and alpha-D-glucose 1-phosphate (G1P) to produce pyrophosphate and ADP-Glc. The protein is Glucose-1-phosphate adenylyltransferase 2 of Alkalilimnicola ehrlichii (strain ATCC BAA-1101 / DSM 17681 / MLHE-1).